The chain runs to 151 residues: Phosphopantetheine adenylyltransferase (151 aa).

Threonine 9 provides a ligand contact to substrate. ATP contacts are provided by residues 9-10 and histidine 17; that span reads TF. Residues lysine 41, threonine 73, and arginine 87 each contribute to the substrate site. Residues 88–90, glutamate 98, and 122–128 each bind ATP; these read GIR and LTCVSST.

Belongs to the bacterial CoaD family. As to quaternary structure, homohexamer. Mg(2+) is required as a cofactor.

It localises to the cytoplasm. The catalysed reaction is (R)-4'-phosphopantetheine + ATP + H(+) = 3'-dephospho-CoA + diphosphate. It functions in the pathway cofactor biosynthesis; coenzyme A biosynthesis; CoA from (R)-pantothenate: step 4/5. Its function is as follows. Reversibly transfers an adenylyl group from ATP to 4'-phosphopantetheine, yielding dephospho-CoA (dPCoA) and pyrophosphate. The chain is Phosphopantetheine adenylyltransferase from Bacteroides thetaiotaomicron (strain ATCC 29148 / DSM 2079 / JCM 5827 / CCUG 10774 / NCTC 10582 / VPI-5482 / E50).